The chain runs to 294 residues: Formamidopyrimidine-DNA glycosylase (294 aa).

The active-site Schiff-base intermediate with DNA is Pro2. Residue Glu3 is the Proton donor of the active site. The active-site Proton donor; for beta-elimination activity is the Lys58. The DNA site is built by His105, Arg124, and Lys167. The segment at Gln258–Lys294 adopts an FPG-type zinc-finger fold. Arg284 (proton donor; for delta-elimination activity) is an active-site residue.

Belongs to the FPG family. Monomer. The cofactor is Zn(2+).

It carries out the reaction Hydrolysis of DNA containing ring-opened 7-methylguanine residues, releasing 2,6-diamino-4-hydroxy-5-(N-methyl)formamidopyrimidine.. The enzyme catalyses 2'-deoxyribonucleotide-(2'-deoxyribose 5'-phosphate)-2'-deoxyribonucleotide-DNA = a 3'-end 2'-deoxyribonucleotide-(2,3-dehydro-2,3-deoxyribose 5'-phosphate)-DNA + a 5'-end 5'-phospho-2'-deoxyribonucleoside-DNA + H(+). Involved in base excision repair of DNA damaged by oxidation or by mutagenic agents. Acts as a DNA glycosylase that recognizes and removes damaged bases. Has a preference for oxidized purines, such as 7,8-dihydro-8-oxoguanine (8-oxoG). Has AP (apurinic/apyrimidinic) lyase activity and introduces nicks in the DNA strand. Cleaves the DNA backbone by beta-delta elimination to generate a single-strand break at the site of the removed base with both 3'- and 5'-phosphates. The polypeptide is Formamidopyrimidine-DNA glycosylase (Afipia carboxidovorans (strain ATCC 49405 / DSM 1227 / KCTC 32145 / OM5) (Oligotropha carboxidovorans)).